The sequence spans 214 residues: Pyridoxine/pyridoxamine 5'-phosphate oxidase (214 aa).

Substrate is bound by residues 8 to 11 and lysine 66; that span reads RINY. FMN-binding positions include 61–66, 76–77, arginine 82, lysine 83, and glutamine 105; these read RIVLIK and FT. The substrate site is built by tyrosine 123, arginine 127, and serine 131. FMN contacts are provided by residues 140–141 and tryptophan 184; that span reads QS. 190–192 serves as a coordination point for substrate; it reads RLH. Arginine 194 serves as a coordination point for FMN.

This sequence belongs to the pyridoxamine 5'-phosphate oxidase family. Homodimer. FMN is required as a cofactor.

It catalyses the reaction pyridoxamine 5'-phosphate + O2 + H2O = pyridoxal 5'-phosphate + H2O2 + NH4(+). It carries out the reaction pyridoxine 5'-phosphate + O2 = pyridoxal 5'-phosphate + H2O2. The protein operates within cofactor metabolism; pyridoxal 5'-phosphate salvage; pyridoxal 5'-phosphate from pyridoxamine 5'-phosphate: step 1/1. Its pathway is cofactor metabolism; pyridoxal 5'-phosphate salvage; pyridoxal 5'-phosphate from pyridoxine 5'-phosphate: step 1/1. Its function is as follows. Catalyzes the oxidation of either pyridoxine 5'-phosphate (PNP) or pyridoxamine 5'-phosphate (PMP) into pyridoxal 5'-phosphate (PLP). The sequence is that of Pyridoxine/pyridoxamine 5'-phosphate oxidase from Burkholderia ambifaria (strain ATCC BAA-244 / DSM 16087 / CCUG 44356 / LMG 19182 / AMMD) (Burkholderia cepacia (strain AMMD)).